The chain runs to 816 residues: Leucine--tRNA ligase (816 aa).

Positions 42-52 match the 'HIGH' region motif; sequence PYPSGSLHMGH. The short motif at 574-578 is the 'KMSKS' region element; that stretch reads KMSKS. K577 is an ATP binding site.

The protein belongs to the class-I aminoacyl-tRNA synthetase family.

The protein localises to the cytoplasm. It catalyses the reaction tRNA(Leu) + L-leucine + ATP = L-leucyl-tRNA(Leu) + AMP + diphosphate. This chain is Leucine--tRNA ligase, found in Ruthia magnifica subsp. Calyptogena magnifica.